We begin with the raw amino-acid sequence, 300 residues long: Small ribosomal subunit protein uS4m (300 aa).

The S4 RNA-binding domain occupies 146–209 (KRVDMVLLRS…MKRKLLKRLK (64 aa)).

Belongs to the universal ribosomal protein uS4 family.

Its subcellular location is the mitochondrion. This Dictyostelium discoideum (Social amoeba) protein is Small ribosomal subunit protein uS4m (mrps4).